Consider the following 199-residue polypeptide: dTTP/UTP pyrophosphatase (199 aa).

Catalysis depends on Asp-76, which acts as the Proton acceptor.

Belongs to the Maf family. YhdE subfamily. Requires a divalent metal cation as cofactor.

The protein localises to the cytoplasm. The enzyme catalyses dTTP + H2O = dTMP + diphosphate + H(+). The catalysed reaction is UTP + H2O = UMP + diphosphate + H(+). Its function is as follows. Nucleoside triphosphate pyrophosphatase that hydrolyzes dTTP and UTP. May have a dual role in cell division arrest and in preventing the incorporation of modified nucleotides into cellular nucleic acids. The protein is dTTP/UTP pyrophosphatase of Chlorobaculum parvum (strain DSM 263 / NCIMB 8327) (Chlorobium vibrioforme subsp. thiosulfatophilum).